We begin with the raw amino-acid sequence, 396 residues long: 3-amino-4-hydroxybenzoic acid synthase (396 aa).

The disordered stretch occupies residues 1–29 (MSSSPSPSPSSSSSSSASSSASSSPSSSS).

The protein belongs to the archaeal-type DHQ synthase family. GriH subfamily. As to quaternary structure, monomer. It depends on Mn(2+) as a cofactor.

It carries out the reaction 2-amino-4,5-dihydroxy-6-oxo-7-(phosphooxy)heptanoate = 3-amino-4-hydroxybenzoate + phosphate + 2 H2O + H(+). Functionally, catalyzes the cyclization of 2-amino-4,5-dihydroxy-6-one-heptanoic acid-7-phosphate to yield 3-amino-4-hydroxybenzoic acid (3,4-AHBA). In Streptomyces griseus subsp. griseus (strain JCM 4626 / CBS 651.72 / NBRC 13350 / KCC S-0626 / ISP 5235), this protein is 3-amino-4-hydroxybenzoic acid synthase (griH).